Reading from the N-terminus, the 261-residue chain is Putative diacylated glycolipid transporter LprF (261 aa).

Positions 1–38 (MNGLISQACGSHRPRRPSSLGAVAILIAATLFATVVAG) are cleaved as a signal peptide. The N-palmitoyl cysteine moiety is linked to residue cysteine 39. The S-diacylglycerol cysteine moiety is linked to residue cysteine 39. The interval 42–61 (KPTTASSPSPGSPSPEAQQI) is disordered.

The protein belongs to the LppX/LprAFG lipoprotein family. In terms of assembly, monomer. In terms of processing, modified by Lgt on Cys-39 with an S-linked diacylglycerol with a mixture of C16, C18 and C19 fatty acids (palmitic, stearic and tuberculostearic acid respectively), signal peptide is removed by LspA, modified by Lnt with an amide-linked mixture of C16 and C19 fatty acids.

It localises to the cell membrane. In terms of biological role, might be involved in transporting short diacylated glycolipids to the cell outer membrane. Binds glycolipids that contain a diacylated glycerophosphate or a diacylated phosphatidylinositol moiety with C14 and C16 chains (upon overexpression in M.smegmatis; M.smegmatis does not encode this gene). Overexpression in M.smegmatis increases the cell wall glycolipid LAM/LM ratio (lipoarabinomannan/lipomannan), suggesting perhaps this protein is involved in the preferential translocation of diacylated LAM to the outer cell membrane. Overexpressing M.smegmatis cells adhere less well to hexadecane droplets, indicating decrease in the hydrophobicity of the cell surface, and have a slightly increased resistance to the antibiotic ethambutol. This Mycobacterium bovis (strain ATCC BAA-935 / AF2122/97) protein is Putative diacylated glycolipid transporter LprF (lprF).